The following is a 624-amino-acid chain: Protein FAM234B (624 aa).

The interval 1–91 is disordered; sequence MATVLSRALK…GFPSEPLGGL (91 aa). The residue at position 16 (Ser16) is a Phosphoserine. Thr26 is modified (phosphothreonine). 3 positions are modified to phosphoserine: Ser30, Ser33, and Ser63. A helical transmembrane segment spans residues 107 to 127; sequence VFLLTLVISMVLVLLCAFLIP.

Belongs to the FAM234 family.

The protein localises to the membrane. It is found in the golgi outpost. It localises to the cytoplasm. Its subcellular location is the cytoskeleton. The protein resides in the microtubule organizing center. This chain is Protein FAM234B, found in Mus musculus (Mouse).